Here is a 355-residue protein sequence, read N- to C-terminus: DNA polymerase IV (355 aa).

Residues 6–187 (IIHVDMDAFY…LPVGKIHGVG (182 aa)) form the UmuC domain. Mg(2+)-binding residues include Asp10 and Asp105. Glu106 is a catalytic residue.

Belongs to the DNA polymerase type-Y family. As to quaternary structure, monomer. The cofactor is Mg(2+).

Its subcellular location is the cytoplasm. It carries out the reaction DNA(n) + a 2'-deoxyribonucleoside 5'-triphosphate = DNA(n+1) + diphosphate. In terms of biological role, poorly processive, error-prone DNA polymerase involved in untargeted mutagenesis. Copies undamaged DNA at stalled replication forks, which arise in vivo from mismatched or misaligned primer ends. These misaligned primers can be extended by PolIV. Exhibits no 3'-5' exonuclease (proofreading) activity. May be involved in translesional synthesis, in conjunction with the beta clamp from PolIII. This is DNA polymerase IV from Alkalilimnicola ehrlichii (strain ATCC BAA-1101 / DSM 17681 / MLHE-1).